A 497-amino-acid polypeptide reads, in one-letter code: 4,4'-diaponeurosporene oxygenase (497 aa).

7–19 (VIGGGLGGISAAI) contributes to the FAD binding site.

It belongs to the carotenoid/retinoid oxidoreductase family. CrtP subfamily. The cofactor is FAD.

It catalyses the reaction all-trans-4,4'-diaponeurosporene + 2 AH2 + 2 O2 = 4,4'-diaponeurosporenal + 2 A + 3 H2O. It participates in carotenoid biosynthesis; staphyloxanthin biosynthesis; staphyloxanthin from farnesyl diphosphate: step 3/5. Involved in the biosynthesis of the yellow-orange carotenoid staphyloxanthin, which plays a role in the virulence via its protective function against oxidative stress. Catalyzes the oxidation of the terminal methyl side group of 4,4'-diaponeurosporene to form 4,4'-diaponeurosporen-4-al. The protein is 4,4'-diaponeurosporene oxygenase of Staphylococcus aureus (strain USA300).